A 188-amino-acid chain; its full sequence is uncharacterized protein (188 aa).

The first 23 residues, 1–23, serve as a signal peptide directing secretion; sequence MVRPKLAFYILPLLLAFLGSALG. Asparagine 74 carries N-linked (GlcNAc...) asparagine glycosylation.

This is an uncharacterized protein from Mus musculus (Mouse).